The sequence spans 423 residues: Putative UPF0496 protein 5 (423 aa).

Residues 1–14 (MGNRHGIMRPRRLA) show a composition bias toward basic residues. The segment at 1–37 (MGNRHGIMRPRRLASGRSAAEEEEDGEGEPGSYEAAC) is disordered. Transmembrane regions (helical) follow at residues 224–244 (IVFLTSFAALLVCSVVAAAIA) and 247–267 (PVAAALAAAASMPVGSAGKWM).

It belongs to the UPF0496 family.

It is found in the membrane. This is Putative UPF0496 protein 5 from Oryza sativa subsp. japonica (Rice).